The sequence spans 304 residues: Mitochondrial glycine transporter (304 aa).

Solcar repeat units follow at residues 3–82 (GKSK…VREA), 106–186 (ENLI…LKVA), and 209–293 (SSAM…LVKR). The next 6 helical transmembrane spans lie at 9-34 (IYAG…TRVQ), 57-83 (GTLP…REAV), 108-133 (LISG…VRYE), 161-184 (GWAA…EQLK), 213-239 (INSV…KTRM), and 268-286 (GLAL…SWCI).

This sequence belongs to the mitochondrial carrier (TC 2.A.29) family. SLC25A38 subfamily.

It is found in the mitochondrion inner membrane. It catalyses the reaction glycine(in) = glycine(out). Functionally, mitochondrial glycine transporter that imports glycine into the mitochondrial matrix. Plays an important role in providing glycine for the first enzymatic step in heme biosynthesis, the condensation of glycine with succinyl-CoA to produce 5-aminolevulinate (ALA) in the mitochondrial matrix. The polypeptide is Mitochondrial glycine transporter (Yarrowia lipolytica (strain CLIB 122 / E 150) (Yeast)).